Reading from the N-terminus, the 276-residue chain is MGIKLFKPTTPSRRNMSANTFEEITTDKPEKSLLVSLKRTGGRNSQGKITVRHRGGGAKRKYRIIDFKRDKDGIPAKVATIEYDPNRTAFIALVVYTDGEKRYIIAPQGLKVGDVIVSGPDADIKAGNCLPIKNIPVGTFVHNIELASGKGAQLVRSAGGSAQLMAKEGNYATIKLPSGETRYVRIECRATIGTVSNVKHEIMSIGKAGRKRKMGFRPTVRGSAMNPCDHPHGGGEGRTPIGMSSPVTPWGKPALGYKTRKTKKYSDRLIIKRKND.

The segment at 218–255 (PTVRGSAMNPCDHPHGGGEGRTPIGMSSPVTPWGKPAL) is disordered.

The protein belongs to the universal ribosomal protein uL2 family. In terms of assembly, part of the 50S ribosomal subunit. Forms a bridge to the 30S subunit in the 70S ribosome.

In terms of biological role, one of the primary rRNA binding proteins. Required for association of the 30S and 50S subunits to form the 70S ribosome, for tRNA binding and peptide bond formation. It has been suggested to have peptidyltransferase activity; this is somewhat controversial. Makes several contacts with the 16S rRNA in the 70S ribosome. This is Large ribosomal subunit protein uL2 from Clostridium tetani (strain Massachusetts / E88).